The chain runs to 2273 residues: Linear gramicidin synthase subunit A (2273 aa).

The GART stretch occupies residues 1–144; the sequence is MRILFLTTFM…AIEELFIREW (144 aa). 2 Carrier domains span residues 693–767 and 1724–1798; these read APTD…TEQK and APRT…TSEQ. Ser728 and Ser1759 each carry O-(pantetheine 4'-phosphoryl)serine.

It belongs to the ATP-dependent AMP-binding enzyme family. Large multienzyme complex composed of 4 subunits; LgrA, LgrB, LgrC and LgrD. It depends on pantetheine 4'-phosphate as a cofactor.

Its function is as follows. Activates valine (or leucine, but much less frequently), and then glycine and catalyzes the formation of the peptide bond in the first step of peptide synthesis. This enzyme may also play a role in N-formylation of the first amino acid residue in the synthesized dipeptide. The sequence is that of Linear gramicidin synthase subunit A (lgrA) from Brevibacillus parabrevis.